Reading from the N-terminus, the 260-residue chain is MFDIGVNLTSTQFASDREKVISRAREAGVTGMLITGTNALESQQAQKLAEAHQDYCWSTAGVHPHHASEWSADVANTLRRLAEKKDVVAIGECGLDFNRNLSAHQQQEYAFDAQLALAAELNMPVFLHCREAHERFAAVLEPWLPKLPAAVIHCFTGTREELTACLDMGLSVGITGWVCDERRGIALREMLPLIPAERLLLETDAPYLLPRDMRPRPTSRRNEPCFLPHILQQVANWRGENVEMLARQVDHNARKLFGLI.

Positions 92, 128, and 153 each coordinate a divalent metal cation.

This sequence belongs to the metallo-dependent hydrolases superfamily. TatD-type hydrolase family. TatD subfamily. Monomer. Mg(2+) is required as a cofactor.

The protein resides in the cytoplasm. 3'-5' exonuclease that prefers single-stranded DNA and RNA. May play a role in the H(2)O(2)-induced DNA damage repair. This Pantoea ananatis (strain LMG 20103) protein is 3'-5' ssDNA/RNA exonuclease TatD.